Here is a 488-residue protein sequence, read N- to C-terminus: Probable cytosol aminopeptidase (488 aa).

Mn(2+)-binding residues include K253 and D258. Residue K265 is part of the active site. Mn(2+) contacts are provided by D276, D335, and E337. R339 is an active-site residue.

It belongs to the peptidase M17 family. Mn(2+) serves as cofactor.

The protein resides in the cytoplasm. The enzyme catalyses Release of an N-terminal amino acid, Xaa-|-Yaa-, in which Xaa is preferably Leu, but may be other amino acids including Pro although not Arg or Lys, and Yaa may be Pro. Amino acid amides and methyl esters are also readily hydrolyzed, but rates on arylamides are exceedingly low.. It carries out the reaction Release of an N-terminal amino acid, preferentially leucine, but not glutamic or aspartic acids.. Its function is as follows. Presumably involved in the processing and regular turnover of intracellular proteins. Catalyzes the removal of unsubstituted N-terminal amino acids from various peptides. This is Probable cytosol aminopeptidase from Dinoroseobacter shibae (strain DSM 16493 / NCIMB 14021 / DFL 12).